Consider the following 148-residue polypeptide: Protoporphyrinogen IX oxidase (148 aa).

Transmembrane regions (helical) follow at residues 7–27 (YFLW…AALF), 59–79 (FIAS…LLIA), 86–106 (GGWL…HFYC), and 128–148 (FNEI…VKPF). His15 contributes to the heme binding site. Lys92 is a binding site for heme.

Belongs to the HemJ family. Homodimer. The cofactor is heme b.

It is found in the cell membrane. The catalysed reaction is protoporphyrinogen IX + 3 A = protoporphyrin IX + 3 AH2. It participates in porphyrin-containing compound metabolism; protoporphyrin-IX biosynthesis; protoporphyrin-IX from protoporphyrinogen-IX: step 1/1. Catalyzes the oxidation of protoporphyrinogen IX to protoporphyrin IX. Is involved in the biosynthesis of tetrapyrrole molecules like heme. Does not use oxygen or artificial electron acceptors such as menadione or benzoquinone. This Helicobacter pylori (strain J99 / ATCC 700824) (Campylobacter pylori J99) protein is Protoporphyrinogen IX oxidase.